The following is a 302-amino-acid chain: Methionyl-tRNA formyltransferase (302 aa).

Position 107–110 (Ser107–Pro110) interacts with (6S)-5,6,7,8-tetrahydrofolate.

The protein belongs to the Fmt family.

It carries out the reaction L-methionyl-tRNA(fMet) + (6R)-10-formyltetrahydrofolate = N-formyl-L-methionyl-tRNA(fMet) + (6S)-5,6,7,8-tetrahydrofolate + H(+). Its function is as follows. Attaches a formyl group to the free amino group of methionyl-tRNA(fMet). The formyl group appears to play a dual role in the initiator identity of N-formylmethionyl-tRNA by promoting its recognition by IF2 and preventing the misappropriation of this tRNA by the elongation apparatus. This Leifsonia xyli subsp. xyli (strain CTCB07) protein is Methionyl-tRNA formyltransferase.